The chain runs to 494 residues: Transcriptional regulator calD (494 aa).

The protein resides in the nucleus. In terms of biological role, transcription co-regulator that might be involved in the regulation of the expression of the gene cluster that mediates the biosynthesis of calbistrins and related compounds such as decumbenones. Calbistrin A is a secondary metabolite with an interesting structure that was recently found to have bioactivity against leukemia cells. It consists of two polyketides linked by an ester bond: a bicyclic decalin containing polyketide and a linear 12 carbon dioic acid structure. The chain is Transcriptional regulator calD from Penicillium decumbens.